A 945-amino-acid chain; its full sequence is Isoleucine--tRNA ligase 1 (945 aa).

The short motif at 66-76 (PYANGDIHLGH) is the 'HIGH' region element. Glu581 contacts L-isoleucyl-5'-AMP. The short motif at 622 to 626 (KMSKS) is the 'KMSKS' region element. Residue Lys625 coordinates ATP. 4 residues coordinate Zn(2+): Cys908, Cys911, Cys928, and Cys931.

This sequence belongs to the class-I aminoacyl-tRNA synthetase family. IleS type 1 subfamily. In terms of assembly, monomer. Zn(2+) serves as cofactor.

It is found in the cytoplasm. The catalysed reaction is tRNA(Ile) + L-isoleucine + ATP = L-isoleucyl-tRNA(Ile) + AMP + diphosphate. Functionally, catalyzes the attachment of isoleucine to tRNA(Ile). As IleRS can inadvertently accommodate and process structurally similar amino acids such as valine, to avoid such errors it has two additional distinct tRNA(Ile)-dependent editing activities. One activity is designated as 'pretransfer' editing and involves the hydrolysis of activated Val-AMP. The other activity is designated 'posttransfer' editing and involves deacylation of mischarged Val-tRNA(Ile). The chain is Isoleucine--tRNA ligase 1 from Burkholderia pseudomallei (strain K96243).